Consider the following 437-residue polypeptide: Type II methyltransferase M.HgiCII (437 aa).

The SAM-dependent MTase C5-type domain maps to 4–431 (FRFIDLFAGI…KALPNDHLFE (428 aa)). Residue Cys75 is part of the active site.

It belongs to the class I-like SAM-binding methyltransferase superfamily. C5-methyltransferase family.

It catalyses the reaction a 2'-deoxycytidine in DNA + S-adenosyl-L-methionine = a 5-methyl-2'-deoxycytidine in DNA + S-adenosyl-L-homocysteine + H(+). Functionally, a methylase that recognizes the double-stranded sequence 5'-GGWCC-3', methylates C-? on both strands and protects the DNA from cleavage by the HgiCII endonuclease. This Herpetosiphon aurantiacus (Herpetosiphon giganteus) protein is Type II methyltransferase M.HgiCII.